Consider the following 140-residue polypeptide: Transmembrane protein 107 (140 aa).

The next 2 helical transmembrane spans lie at 7-27 (LVPS…TLFW) and 53-73 (LVAA…GFLS). N-linked (GlcNAc...) asparagine glycosylation occurs at N79. 2 consecutive transmembrane segments (helical) span residues 83–103 (SLLS…FVFE) and 113–133 (IFTF…IAVF).

As to quaternary structure, part of the tectonic-like complex (also named B9 complex). Interacts with TMEM237, TMEM231, MKS1 and TMEM216.

It localises to the membrane. It is found in the cell projection. The protein localises to the cilium. Its function is as follows. Plays a role in cilia formation and embryonic patterning. Requires for normal Sonic hedgehog (Shh) signaling in the neural tube and acts in combination with GLI2 and GLI3 to pattern ventral and intermediate neuronal cell types. During ciliogenesis regulates the ciliary transition zone localization of some MKS complex proteins. The protein is Transmembrane protein 107 of Mus musculus (Mouse).